A 395-amino-acid polypeptide reads, in one-letter code: Vacuolar protease A (395 aa).

A signal peptide spans 1–18 (MKGSLLLAGATLLGCTSA). The propeptide at 19–72 (KLHSLKLKKVSLKEQLEHADIDVQIKSLGQKYMGIRPGQHEQQMFKEQTPIEAE) is activation peptide. Residues 87-392 (YFSEISIGTP…DLGKGTVGLA (306 aa)) form the Peptidase A1 domain. Aspartate 105 is an active-site residue. A disulfide bond links cysteine 118 and cysteine 123. Residue asparagine 140 is glycosylated (N-linked (GlcNAc...) asparagine). Aspartate 289 is a catalytic residue. An intrachain disulfide couples cysteine 318 to cysteine 351. N-linked (GlcNAc...) asparagine glycosylation is present at asparagine 335.

The protein belongs to the peptidase A1 family.

The protein localises to the vacuole lumen. Its subcellular location is the secreted. It catalyses the reaction Hydrolysis of proteins with broad specificity for peptide bonds. Cleaves -Leu-Leu-|-Val-Tyr- bond in a synthetic substrate. Does not act on esters of Tyr or Arg.. Its function is as follows. Vacuolar aspartic endopeptidase which is probably also secreted and contributes to virulence. The polypeptide is Vacuolar protease A (PEP2) (Arthroderma otae (strain ATCC MYA-4605 / CBS 113480) (Microsporum canis)).